Reading from the N-terminus, the 434-residue chain is Ribitol-5-phosphate xylosyltransferase 1 (434 aa).

Topologically, residues 1-7 (MRFFRRK) are cytoplasmic. The chain crosses the membrane as a helical; Signal-anchor for type II membrane protein span at residues 8–28 (IAIIVILAYAIFSLYAAYNVF). The Extracellular portion of the chain corresponds to 29–434 (FSKRVISRVH…VLEENFFKIT (406 aa)).

The protein belongs to the TMEM5 family.

Its subcellular location is the golgi apparatus membrane. The enzyme catalyses 3-O-[Rib-ol-P-Rib-ol-P-3-beta-D-GalNAc-(1-&gt;3)-beta-D-GlcNAc-(1-&gt;4)-(O-6-P-alpha-D-Man)]-Thr-[protein] + UDP-alpha-D-xylose = 3-O-[beta-D-Xyl-(1-&gt;4)-Rib-ol-P-Rib-ol-P-3-beta-D-GalNAc-(1-&gt;3)-beta-D-GlcNAc-(1-&gt;4)-(O-6-P-alpha-D-Man)]-Thr-[protein] + UDP + H(+). It participates in protein modification; protein glycosylation. Acts as a UDP-D-xylose:ribitol-5-phosphate beta1,4-xylosyltransferase, which catalyzes the transfer of UDP-D-xylose to ribitol 5-phosphate (Rbo5P) to form the Xylbeta1-4Rbo5P linkage on O-mannosyl glycan. Participates in the biosynthesis of the phosphorylated O-mannosyl trisaccharide (N-acetylgalactosamine-beta-3-N-acetylglucosamine-beta-4-(phosphate-6-)mannose), a carbohydrate structure present in alpha-dystroglycan (DAG1), which is required for binding laminin G-like domain-containing extracellular proteins with high affinity. This is Ribitol-5-phosphate xylosyltransferase 1 (rxylt1) from Danio rerio (Zebrafish).